The chain runs to 613 residues: Dihydroxy-acid dehydratase (613 aa).

Residue Asp81 participates in Mg(2+) binding. Cys122 lines the [2Fe-2S] cluster pocket. Asp123 and Lys124 together coordinate Mg(2+). The residue at position 124 (Lys124) is an N6-carboxylysine. Cys193 serves as a coordination point for [2Fe-2S] cluster. Glu489 is a Mg(2+) binding site. Ser515 functions as the Proton acceptor in the catalytic mechanism.

The protein belongs to the IlvD/Edd family. Homodimer. [2Fe-2S] cluster is required as a cofactor. Mg(2+) serves as cofactor.

It carries out the reaction (2R)-2,3-dihydroxy-3-methylbutanoate = 3-methyl-2-oxobutanoate + H2O. It catalyses the reaction (2R,3R)-2,3-dihydroxy-3-methylpentanoate = (S)-3-methyl-2-oxopentanoate + H2O. It participates in amino-acid biosynthesis; L-isoleucine biosynthesis; L-isoleucine from 2-oxobutanoate: step 3/4. The protein operates within amino-acid biosynthesis; L-valine biosynthesis; L-valine from pyruvate: step 3/4. In terms of biological role, functions in the biosynthesis of branched-chain amino acids. Catalyzes the dehydration of (2R,3R)-2,3-dihydroxy-3-methylpentanoate (2,3-dihydroxy-3-methylvalerate) into 2-oxo-3-methylpentanoate (2-oxo-3-methylvalerate) and of (2R)-2,3-dihydroxy-3-methylbutanoate (2,3-dihydroxyisovalerate) into 2-oxo-3-methylbutanoate (2-oxoisovalerate), the penultimate precursor to L-isoleucine and L-valine, respectively. The protein is Dihydroxy-acid dehydratase of Pseudomonas putida (strain W619).